A 495-amino-acid chain; its full sequence is Fibronectin type III and SPRY domain-containing protein 1 (495 aa).

Residues 4-99 adopt a coiled-coil conformation; it reads QKESLRKIIT…ALESSEELLE (96 aa). One can recognise a COS domain in the interval 105-162; sequence LCSSENDSFTQAAKDIKDSVTMAPAFRLSLKAKASDSMNHMMVDFTHERNLLQSITFL. Positions 164–268 constitute a Fibronectin type-III domain; it reads VPATPEIHVA…EPVTLETHAF (105 aa). The region spanning 281–476 is the B30.2/SPRY domain; the sequence is LKVEDLSVEW…VQTGLQVPSI (196 aa). The interval 306–332 is disordered; the sequence is KNRTNSPMHSPARTAMMSPKRAPSARV. Ser490 is subject to Phosphoserine.

Oligomerization is required for binding to microtubules.

It localises to the cytoplasm. Its subcellular location is the cytoskeleton. The protein resides in the microtubule organizing center. It is found in the centrosome. The protein localises to the nucleus. It localises to the cleavage furrow. Its function is as follows. May be involved in microtubule organization and stabilization. The chain is Fibronectin type III and SPRY domain-containing protein 1 (fsd1) from Danio rerio (Zebrafish).